Here is a 72-residue protein sequence, read N- to C-terminus: Translation initiation factor IF-1 (72 aa).

Residues M1–R72 enclose the S1-like domain.

The protein belongs to the IF-1 family. As to quaternary structure, component of the 30S ribosomal translation pre-initiation complex which assembles on the 30S ribosome in the order IF-2 and IF-3, IF-1 and N-formylmethionyl-tRNA(fMet); mRNA recruitment can occur at any time during PIC assembly.

It is found in the cytoplasm. In terms of biological role, one of the essential components for the initiation of protein synthesis. Stabilizes the binding of IF-2 and IF-3 on the 30S subunit to which N-formylmethionyl-tRNA(fMet) subsequently binds. Helps modulate mRNA selection, yielding the 30S pre-initiation complex (PIC). Upon addition of the 50S ribosomal subunit IF-1, IF-2 and IF-3 are released leaving the mature 70S translation initiation complex. This Pseudoalteromonas translucida (strain TAC 125) protein is Translation initiation factor IF-1.